Here is a 447-residue protein sequence, read N- to C-terminus: Methylenetetrahydrofolate--tRNA-(uracil-5-)-methyltransferase TrmFO (447 aa).

Residue 13–18 (GAGLAG) participates in FAD binding.

The protein belongs to the MnmG family. TrmFO subfamily. Requires FAD as cofactor.

It localises to the cytoplasm. The catalysed reaction is uridine(54) in tRNA + (6R)-5,10-methylene-5,6,7,8-tetrahydrofolate + NADH + H(+) = 5-methyluridine(54) in tRNA + (6S)-5,6,7,8-tetrahydrofolate + NAD(+). It carries out the reaction uridine(54) in tRNA + (6R)-5,10-methylene-5,6,7,8-tetrahydrofolate + NADPH + H(+) = 5-methyluridine(54) in tRNA + (6S)-5,6,7,8-tetrahydrofolate + NADP(+). Functionally, catalyzes the folate-dependent formation of 5-methyl-uridine at position 54 (M-5-U54) in all tRNAs. This is Methylenetetrahydrofolate--tRNA-(uracil-5-)-methyltransferase TrmFO from Streptococcus thermophilus (strain CNRZ 1066).